The following is a 122-amino-acid chain: Large ribosomal subunit protein uL18 (122 aa).

The protein belongs to the universal ribosomal protein uL18 family. Part of the 50S ribosomal subunit; part of the 5S rRNA/L5/L18/L25 subcomplex. Contacts the 5S and 23S rRNAs.

Functionally, this is one of the proteins that bind and probably mediate the attachment of the 5S RNA into the large ribosomal subunit, where it forms part of the central protuberance. The protein is Large ribosomal subunit protein uL18 of Synechococcus sp. (strain JA-3-3Ab) (Cyanobacteria bacterium Yellowstone A-Prime).